Reading from the N-terminus, the 163-residue chain is Single-stranded DNA-binding protein 2 (163 aa).

The SSB domain occupies 1–104 (MINNVVLVGR…VVADNFQMLE (104 aa)). The interval 109-163 (REGGSTGSFNGGFNNNTSSSNSYSAPAQQTPNFGRDDSPFGNSNPMDISDDDLPF) is disordered. Low complexity predominate over residues 119-130 (GGFNNNTSSSNS). Residues 131 to 140 (YSAPAQQTPN) show a composition bias toward polar residues. Positions 158-163 (DDDLPF) match the Important for interaction with partner proteins motif.

In terms of assembly, homotetramer.

Plays an important role in DNA replication, recombination and repair. Binds to ssDNA and to an array of partner proteins to recruit them to their sites of action during DNA metabolism. The sequence is that of Single-stranded DNA-binding protein 2 (ssb2) from Streptococcus pyogenes serotype M6 (strain ATCC BAA-946 / MGAS10394).